The sequence spans 95 residues: Aspartyl/glutamyl-tRNA(Asn/Gln) amidotransferase subunit C (95 aa).

This sequence belongs to the GatC family. In terms of assembly, heterotrimer of A, B and C subunits.

The catalysed reaction is L-glutamyl-tRNA(Gln) + L-glutamine + ATP + H2O = L-glutaminyl-tRNA(Gln) + L-glutamate + ADP + phosphate + H(+). It catalyses the reaction L-aspartyl-tRNA(Asn) + L-glutamine + ATP + H2O = L-asparaginyl-tRNA(Asn) + L-glutamate + ADP + phosphate + 2 H(+). In terms of biological role, allows the formation of correctly charged Asn-tRNA(Asn) or Gln-tRNA(Gln) through the transamidation of misacylated Asp-tRNA(Asn) or Glu-tRNA(Gln) in organisms which lack either or both of asparaginyl-tRNA or glutaminyl-tRNA synthetases. The reaction takes place in the presence of glutamine and ATP through an activated phospho-Asp-tRNA(Asn) or phospho-Glu-tRNA(Gln). The protein is Aspartyl/glutamyl-tRNA(Asn/Gln) amidotransferase subunit C of Beijerinckia indica subsp. indica (strain ATCC 9039 / DSM 1715 / NCIMB 8712).